Reading from the N-terminus, the 416-residue chain is Phosphatidylinositol 5-phosphate 4-kinase type-2 beta (416 aa).

Ser2 bears the N-acetylserine mark. Thr8 is subject to Phosphothreonine. Ser19 carries the post-translational modification Phosphoserine. Residues 38 to 415 (ASEPILSVLM…RFNEFMSNIL (378 aa)) form the PIPK domain. The segment at 64–70 (VMLMPDD) is required for interaction with PIP5K1A. An N6-acetyllysine mark is found at Lys94 and Lys150. Residues 202-204 (RNV) and Lys214 contribute to the ATP site. GTP contacts are provided by residues 203-204 (NV) and Lys214. Thr322 is subject to Phosphothreonine. Position 326 is a phosphoserine (Ser326). Residue Asp369 participates in GTP binding.

As to quaternary structure, homodimer. Binds TNFRSF1A. Interacts with PIP4K2A; the interaction suppresses ubiquitination by the SPOP/CUL3 complex. Ubiquitinated by the SPOP/CUL3 complex. Ubiquitination is stimulated by PtdIns5P levels. Post-translationally, phosphorylated on serine residues. As to expression, highly expressed in brain, heart, pancreas, skeletal muscle and kidney. Detected at lower levels in placenta, lung and liver.

The protein localises to the endoplasmic reticulum membrane. It localises to the cell membrane. Its subcellular location is the nucleus. It is found in the cytoplasm. The enzyme catalyses a 1,2-diacyl-sn-glycero-3-phospho-(1D-myo-inositol-5-phosphate) + ATP = a 1,2-diacyl-sn-glycero-3-phospho-(1D-myo-inositol-4,5-bisphosphate) + ADP + H(+). It catalyses the reaction 1,2-dihexadecanoyl-sn-glycero-3-phospho-(1D-myo-inositol-5-phosphate) + ATP = 1,2-dihexadecanoyl-sn-glycero-3-phospho-(1D-myo-inositol-4,5-bisphosphate) + ADP + H(+). The catalysed reaction is 1,2-dihexadecanoyl-sn-glycero-3-phospho-(1D-myo-inositol-5-phosphate) + GTP = 1,2-dihexadecanoyl-sn-glycero-3-phospho-(1D-myo-inositol-4,5-bisphosphate) + GDP + H(+). Participates in the biosynthesis of phosphatidylinositol 4,5-bisphosphate. Preferentially utilizes GTP, rather than ATP, for PI(5)P phosphorylation and its activity reflects changes in direct proportion to the physiological GTP concentration. Its GTP-sensing activity is critical for metabolic adaptation. PIP4Ks negatively regulate insulin signaling through a catalytic-independent mechanism. They interact with PIP5Ks and suppress PIP5K-mediated PtdIns(4,5)P2 synthesis and insulin-dependent conversion to PtdIns(3,4,5)P3. This chain is Phosphatidylinositol 5-phosphate 4-kinase type-2 beta, found in Homo sapiens (Human).